A 254-amino-acid polypeptide reads, in one-letter code: uncharacterized protein (254 aa).

Positions 14–81 (IRLQKVLSQA…DSLVYLALNK (68 aa)) constitute an S4 RNA-binding domain. D119 acts as the Nucleophile in catalysis.

This sequence belongs to the pseudouridine synthase RsuA family.

It carries out the reaction a uridine in RNA = a pseudouridine in RNA. This is an uncharacterized protein from Mycobacterium bovis (strain ATCC BAA-935 / AF2122/97).